The following is a 430-amino-acid chain: Histidine--tRNA ligase, chloroplastic (430 aa).

Belongs to the class-II aminoacyl-tRNA synthetase family.

The protein localises to the plastid. Its subcellular location is the chloroplast. The enzyme catalyses tRNA(His) + L-histidine + ATP = L-histidyl-tRNA(His) + AMP + diphosphate + H(+). In Porphyra purpurea (Red seaweed), this protein is Histidine--tRNA ligase, chloroplastic (hisS).